A 450-amino-acid chain; its full sequence is Trigger factor (450 aa).

Positions 163–249 constitute a PPIase FKBP-type domain; the sequence is EDFVLIDYQG…LKEIQEQILP (87 aa). Residues 431 to 443 show a composition bias toward acidic residues; sequence PEVETEVSESAAD. The segment at 431 to 450 is disordered; the sequence is PEVETEVSESAADVEDKTDQ.

Belongs to the FKBP-type PPIase family. Tig subfamily.

The protein resides in the cytoplasm. It carries out the reaction [protein]-peptidylproline (omega=180) = [protein]-peptidylproline (omega=0). Involved in protein export. Acts as a chaperone by maintaining the newly synthesized protein in an open conformation. Functions as a peptidyl-prolyl cis-trans isomerase. This is Trigger factor from Desulforapulum autotrophicum (strain ATCC 43914 / DSM 3382 / VKM B-1955 / HRM2) (Desulfobacterium autotrophicum).